A 627-amino-acid chain; its full sequence is tRNA uridine 5-carboxymethylaminomethyl modification enzyme MnmG (627 aa).

FAD contacts are provided by residues 13–18, valine 125, and serine 180; that span reads GGGHAG. Residue 274 to 288 participates in NAD(+) binding; the sequence is GPRYCPSIEDKVVRF. Glutamine 371 serves as a coordination point for FAD.

Belongs to the MnmG family. In terms of assembly, homodimer. Heterotetramer of two MnmE and two MnmG subunits. Requires FAD as cofactor.

The protein resides in the cytoplasm. Functionally, NAD-binding protein involved in the addition of a carboxymethylaminomethyl (cmnm) group at the wobble position (U34) of certain tRNAs, forming tRNA-cmnm(5)s(2)U34. The polypeptide is tRNA uridine 5-carboxymethylaminomethyl modification enzyme MnmG (Francisella philomiragia subsp. philomiragia (strain ATCC 25017 / CCUG 19701 / FSC 153 / O#319-036)).